The sequence spans 114 residues: rRNA-processing protein cgrA (114 aa).

Residues 1-11 show a composition bias toward polar residues; the sequence is MSSAIPTSSVN. The segment at 1-114 is disordered; the sequence is MSSAIPTSSV…REKRNKLLHS (114 aa). Basic and acidic residues predominate over residues 39–93; sequence YEKRLEARKRQEAVKEHERELREEKEAERKAQIQKIKDRRAAKEEKERYEKMAEK. Residues 40–101 adopt a coiled-coil conformation; sequence EKRLEARKRQ…EKMHRKRVER (62 aa). Residues 94–114 are compositionally biased toward basic residues; sequence MHRKRVERLKRREKRNKLLHS.

This sequence belongs to the CGR1 family.

The protein resides in the nucleus. It localises to the nucleolus. Its function is as follows. Involved in nucleolar integrity and required for processing of the pre-rRNA for the 60S ribosome subunit. This Aspergillus fumigatus (strain ATCC MYA-4609 / CBS 101355 / FGSC A1100 / Af293) (Neosartorya fumigata) protein is rRNA-processing protein cgrA (cgrA).